We begin with the raw amino-acid sequence, 95 residues long: Phosphoribosyl-ATP pyrophosphatase (95 aa).

The protein belongs to the PRA-PH family.

The protein localises to the cytoplasm. The enzyme catalyses 1-(5-phospho-beta-D-ribosyl)-ATP + H2O = 1-(5-phospho-beta-D-ribosyl)-5'-AMP + diphosphate + H(+). Its pathway is amino-acid biosynthesis; L-histidine biosynthesis; L-histidine from 5-phospho-alpha-D-ribose 1-diphosphate: step 2/9. This Halobacterium salinarum (strain ATCC 29341 / DSM 671 / R1) protein is Phosphoribosyl-ATP pyrophosphatase.